The following is a 181-amino-acid chain: Oligoribonuclease (181 aa).

Positions 8–171 (LIWVDLEMTG…DDIRESIAEL (164 aa)) constitute an Exonuclease domain. Residue Tyr129 is part of the active site.

This sequence belongs to the oligoribonuclease family.

It is found in the cytoplasm. Functionally, 3'-to-5' exoribonuclease specific for small oligoribonucleotides. This is Oligoribonuclease from Vibrio campbellii (strain ATCC BAA-1116).